Here is a 375-residue protein sequence, read N- to C-terminus: Fructose-1,6-bisphosphate aldolase/phosphatase (375 aa).

Aspartate 15 (proton acceptor; for FBP phosphatase activity) is an active-site residue. Aspartate 15, histidine 22, aspartate 56, and aspartate 57 together coordinate Mg(2+). Beta-D-fructose 1,6-bisphosphate is bound at residue histidine 22. Histidine 22 is a dihydroxyacetone phosphate binding site. Tyrosine 94 is a binding site for beta-D-fructose 1,6-bisphosphate. Glutamine 98 provides a ligand contact to Mg(2+). Residue 107–108 (GN) coordinates beta-D-fructose 1,6-bisphosphate. Mg(2+) is bound at residue aspartate 135. Lysine 136 contacts beta-D-fructose 1,6-bisphosphate. Lysine 136 provides a ligand contact to dihydroxyacetone phosphate. Tyrosine 237 serves as the catalytic Proton donor/acceptor; for FBP aldolase activity. Lysine 240, aspartate 241, and aspartate 242 together coordinate Mg(2+). Lysine 240 serves as the catalytic Schiff-base intermediate with DHAP; for FBP aldolase activity. Residues 250-251 (QS), arginine 274, aspartate 295, and tyrosine 357 each bind beta-D-fructose 1,6-bisphosphate. Dihydroxyacetone phosphate contacts are provided by arginine 274 and aspartate 295.

Belongs to the FBP aldolase/phosphatase family. As to quaternary structure, homooctamer; dimer of tetramers. It depends on Mg(2+) as a cofactor.

It carries out the reaction beta-D-fructose 1,6-bisphosphate + H2O = beta-D-fructose 6-phosphate + phosphate. The catalysed reaction is beta-D-fructose 1,6-bisphosphate = D-glyceraldehyde 3-phosphate + dihydroxyacetone phosphate. It participates in carbohydrate biosynthesis; gluconeogenesis. Its activity is regulated as follows. Activity is enhanced by dithioerythritol, and is slightly inhibited by fructose 2,6-bisphosphate. AMP does not inhibit the enzyme activity. Functionally, catalyzes two subsequent steps in gluconeogenesis: the aldol condensation of dihydroxyacetone phosphate (DHAP) and glyceraldehyde-3-phosphate (GA3P) to fructose-1,6-bisphosphate (FBP), and the dephosphorylation of FBP to fructose-6-phosphate (F6P). Does not display hydrolase activity against fructose 2,6-bisphosphate, fructose 6-phosphate, fructose 1-phosphate, glucose 6-phosphate, and glucose 1-phosphate. Exhibits only negligible activity on inositol-1-phosphate (IMP). Is essential for the growth of T.kodakaraensis under gluconeogenic conditions. This Thermococcus kodakarensis (strain ATCC BAA-918 / JCM 12380 / KOD1) (Pyrococcus kodakaraensis (strain KOD1)) protein is Fructose-1,6-bisphosphate aldolase/phosphatase.